Here is a 158-residue protein sequence, read N- to C-terminus: 6,7-dimethyl-8-ribityllumazine synthase (158 aa).

5-amino-6-(D-ribitylamino)uracil-binding positions include phenylalanine 23, 61 to 63 (SFE), and 85 to 87 (AVI). (2S)-2-hydroxy-3-oxobutyl phosphate is bound at residue 90 to 91 (ET). The active-site Proton donor is the histidine 93. Phenylalanine 118 lines the 5-amino-6-(D-ribitylamino)uracil pocket. Arginine 132 is a (2S)-2-hydroxy-3-oxobutyl phosphate binding site.

It belongs to the DMRL synthase family.

The catalysed reaction is (2S)-2-hydroxy-3-oxobutyl phosphate + 5-amino-6-(D-ribitylamino)uracil = 6,7-dimethyl-8-(1-D-ribityl)lumazine + phosphate + 2 H2O + H(+). It functions in the pathway cofactor biosynthesis; riboflavin biosynthesis; riboflavin from 2-hydroxy-3-oxobutyl phosphate and 5-amino-6-(D-ribitylamino)uracil: step 1/2. Catalyzes the formation of 6,7-dimethyl-8-ribityllumazine by condensation of 5-amino-6-(D-ribitylamino)uracil with 3,4-dihydroxy-2-butanone 4-phosphate. This is the penultimate step in the biosynthesis of riboflavin. The protein is 6,7-dimethyl-8-ribityllumazine synthase of Prochlorococcus marinus (strain MIT 9301).